The chain runs to 304 residues: UDP-3-O-acyl-N-acetylglucosamine deacetylase (304 aa).

Zn(2+)-binding residues include His-78, His-237, and Asp-241. The Proton donor role is filled by His-264.

The protein belongs to the LpxC family. Zn(2+) is required as a cofactor.

It catalyses the reaction a UDP-3-O-[(3R)-3-hydroxyacyl]-N-acetyl-alpha-D-glucosamine + H2O = a UDP-3-O-[(3R)-3-hydroxyacyl]-alpha-D-glucosamine + acetate. It participates in glycolipid biosynthesis; lipid IV(A) biosynthesis; lipid IV(A) from (3R)-3-hydroxytetradecanoyl-[acyl-carrier-protein] and UDP-N-acetyl-alpha-D-glucosamine: step 2/6. Functionally, catalyzes the hydrolysis of UDP-3-O-myristoyl-N-acetylglucosamine to form UDP-3-O-myristoylglucosamine and acetate, the committed step in lipid A biosynthesis. This chain is UDP-3-O-acyl-N-acetylglucosamine deacetylase, found in Polynucleobacter asymbioticus (strain DSM 18221 / CIP 109841 / QLW-P1DMWA-1) (Polynucleobacter necessarius subsp. asymbioticus).